Consider the following 215-residue polypeptide: Ribose-5-phosphate isomerase A (215 aa).

Residues 26 to 29 (TGST), 79 to 82 (DGAD), and 92 to 95 (KGGG) each bind substrate. The Proton acceptor role is filled by glutamate 101. A substrate-binding site is contributed by lysine 119.

It belongs to the ribose 5-phosphate isomerase family. As to quaternary structure, homodimer.

The catalysed reaction is aldehydo-D-ribose 5-phosphate = D-ribulose 5-phosphate. Its pathway is carbohydrate degradation; pentose phosphate pathway; D-ribose 5-phosphate from D-ribulose 5-phosphate (non-oxidative stage): step 1/1. In terms of biological role, catalyzes the reversible conversion of ribose-5-phosphate to ribulose 5-phosphate. This is Ribose-5-phosphate isomerase A from Xanthomonas oryzae pv. oryzae (strain MAFF 311018).